The sequence spans 124 residues: MNNLIFVALGGSIGAVFRYLISIFMIQVFGSSFPFGTLMVNVIGSFLMGVIYALGEASQVSPEIKALVGVGLLGALTTFSTFSNETLLLMQQGAWLKAFTNIALNLCLCLFMVYLGQQLVFSRI.

4 helical membrane-spanning segments follow: residues 4 to 24 (LIFVALGGSIGAVFRYLISIF), 35 to 55 (FGTLMVNVIGSFLMGVIYALG), 62 to 82 (PEIKALVGVGLLGALTTFSTF), and 102 to 122 (IALNLCLCLFMVYLGQQLVFS). Na(+) contacts are provided by glycine 74 and threonine 77.

This sequence belongs to the fluoride channel Fluc/FEX (TC 1.A.43) family.

It localises to the cell inner membrane. It carries out the reaction fluoride(in) = fluoride(out). Na(+) is not transported, but it plays an essential structural role and its presence is essential for fluoride channel function. Fluoride-specific ion channel. Important for reducing fluoride concentration in the cell, thus reducing its toxicity. The chain is Fluoride-specific ion channel FluC from Shewanella loihica (strain ATCC BAA-1088 / PV-4).